We begin with the raw amino-acid sequence, 72 residues long: Translation initiation factor IF-1 (72 aa).

In terms of domain architecture, S1-like spans 1–72 (MAKDDVIEVE…TRGRITYRFK (72 aa)).

It belongs to the IF-1 family. As to quaternary structure, component of the 30S ribosomal translation pre-initiation complex which assembles on the 30S ribosome in the order IF-2 and IF-3, IF-1 and N-formylmethionyl-tRNA(fMet); mRNA recruitment can occur at any time during PIC assembly.

It is found in the cytoplasm. Its function is as follows. One of the essential components for the initiation of protein synthesis. Stabilizes the binding of IF-2 and IF-3 on the 30S subunit to which N-formylmethionyl-tRNA(fMet) subsequently binds. Helps modulate mRNA selection, yielding the 30S pre-initiation complex (PIC). Upon addition of the 50S ribosomal subunit IF-1, IF-2 and IF-3 are released leaving the mature 70S translation initiation complex. The sequence is that of Translation initiation factor IF-1 from Streptococcus pneumoniae serotype 2 (strain D39 / NCTC 7466).